The sequence spans 369 residues: Ferredoxin--NADP reductase, chloroplastic (369 aa).

The transit peptide at 1-55 directs the protein to the chloroplast; it reads MTTAVTAAVSFPSTKTTSLSARSSSVISPDKISYKKVPLYYRNVSATGKMGPIRA. The FAD-binding FR-type domain occupies 90–212; sequence KTPYVGRCLL…TGPVGKEMLM (123 aa). FAD is bound by residues 148–151, 169–171, Y175, 186–188, and T227; these read RLYS, CVK, and VCS. Positions 151 and 171 each coordinate NADP(+). NADP(+)-binding positions include T227, 259 to 260, 289 to 290, 299 to 301, 328 to 329, and E367; these read VP, SR, KMY, and GL.

Belongs to the ferredoxin--NADP reductase type 1 family. FAD serves as cofactor.

The protein localises to the plastid. It localises to the chloroplast stroma. The protein resides in the chloroplast thylakoid membrane. It carries out the reaction 2 reduced [2Fe-2S]-[ferredoxin] + NADP(+) + H(+) = 2 oxidized [2Fe-2S]-[ferredoxin] + NADPH. The protein operates within energy metabolism; photosynthesis. May play a key role in regulating the relative amounts of cyclic and non-cyclic electron flow to meet the demands of the plant for ATP and reducing power. The polypeptide is Ferredoxin--NADP reductase, chloroplastic (PETH) (Spinacia oleracea (Spinach)).